We begin with the raw amino-acid sequence, 331 residues long: ADP-L-glycero-D-manno-heptose-6-epimerase (331 aa).

Residues 11–12, 32–33, Lys39, Lys54, 75–79, and Asn92 each bind NADP(+); these read FI, DN, and EGACS. Tyr139 functions as the Proton acceptor in the catalytic mechanism. Lys143 provides a ligand contact to NADP(+). Asn168 serves as a coordination point for substrate. NADP(+)-binding residues include Val169 and Lys177. The active-site Proton acceptor is the Lys177. Residues Arg179, His186, 200–203, Arg213, and Tyr292 each bind substrate; that span reads FGEY.

Belongs to the NAD(P)-dependent epimerase/dehydratase family. HldD subfamily. In terms of assembly, homopentamer. The cofactor is NADP(+).

It carries out the reaction ADP-D-glycero-beta-D-manno-heptose = ADP-L-glycero-beta-D-manno-heptose. It participates in nucleotide-sugar biosynthesis; ADP-L-glycero-beta-D-manno-heptose biosynthesis; ADP-L-glycero-beta-D-manno-heptose from D-glycero-beta-D-manno-heptose 7-phosphate: step 4/4. In terms of biological role, catalyzes the interconversion between ADP-D-glycero-beta-D-manno-heptose and ADP-L-glycero-beta-D-manno-heptose via an epimerization at carbon 6 of the heptose. This is ADP-L-glycero-D-manno-heptose-6-epimerase from Ralstonia pickettii (strain 12J).